Consider the following 110-residue polypeptide: MKKILLIASMTAGLTACASSPAPEEDSRLKEAYSACINTAQGSPEKIEACQSVLNVLKKERRHQQFANEESVRVLDYQQCIQATRTGNDQAVKADCDKVWQEIRSHNNVQ.

Residues 1 to 16 (MKKILLIASMTAGLTA) form the signal peptide. A lipid anchor (N-palmitoyl cysteine) is attached at Cys17. Cys17 is lipidated: S-diacylglycerol cysteine.

It localises to the cell membrane. This is an uncharacterized protein from Salmonella typhimurium (strain LT2 / SGSC1412 / ATCC 700720).